A 380-amino-acid polypeptide reads, in one-letter code: Putative glutamate--cysteine ligase 2 (380 aa).

It belongs to the glutamate--cysteine ligase type 2 family. YbdK subfamily.

The enzyme catalyses L-cysteine + L-glutamate + ATP = gamma-L-glutamyl-L-cysteine + ADP + phosphate + H(+). Its function is as follows. ATP-dependent carboxylate-amine ligase which exhibits weak glutamate--cysteine ligase activity. This chain is Putative glutamate--cysteine ligase 2, found in Pseudomonas entomophila (strain L48).